Consider the following 610-residue polypeptide: UvrABC system protein C (610 aa).

The GIY-YIG domain occupies 16-94 (SAPGVYRMYD…IKQYMPKYNV (79 aa)). Residues 203 to 238 (KQVISQLVAKMETAAIDMEYERAAQYRDQITALRRV) form the UVR domain.

It belongs to the UvrC family. Interacts with UvrB in an incision complex.

It localises to the cytoplasm. Functionally, the UvrABC repair system catalyzes the recognition and processing of DNA lesions. UvrC both incises the 5' and 3' sides of the lesion. The N-terminal half is responsible for the 3' incision and the C-terminal half is responsible for the 5' incision. The sequence is that of UvrABC system protein C from Shewanella frigidimarina (strain NCIMB 400).